The sequence spans 496 residues: Probable cytosol aminopeptidase (496 aa).

The Mn(2+) site is built by Lys-257 and Asp-262. Residue Lys-269 is part of the active site. 3 residues coordinate Mn(2+): Asp-281, Asp-341, and Glu-343. The active site involves Arg-345.

It belongs to the peptidase M17 family. The cofactor is Mn(2+).

It is found in the cytoplasm. The catalysed reaction is Release of an N-terminal amino acid, Xaa-|-Yaa-, in which Xaa is preferably Leu, but may be other amino acids including Pro although not Arg or Lys, and Yaa may be Pro. Amino acid amides and methyl esters are also readily hydrolyzed, but rates on arylamides are exceedingly low.. It catalyses the reaction Release of an N-terminal amino acid, preferentially leucine, but not glutamic or aspartic acids.. Functionally, presumably involved in the processing and regular turnover of intracellular proteins. Catalyzes the removal of unsubstituted N-terminal amino acids from various peptides. This chain is Probable cytosol aminopeptidase, found in Prochlorococcus marinus (strain SARG / CCMP1375 / SS120).